The sequence spans 1298 residues: Ras guanine nucleotide exchange factor Q (1298 aa).

Disordered regions lie at residues 1 to 26 (MDIN…INNF), 46 to 88 (NNNI…SIEG), 211 to 271 (NISN…GPLK), 314 to 384 (YTPP…QQQQ), and 459 to 533 (LSNG…STTT). Composition is skewed to low complexity over residues 211-245 (NISN…NSNN) and 315-384 (TPPS…QQQQ). A coiled-coil region spans residues 352-389 (SSLNANNNTNNNNQQLQQQQQQQQQQQLQQQQQLTKSY). The span at 473-482 (LHLSTESTTS) shows a compositional bias: polar residues. Low complexity-rich tracts occupy residues 483–501 (NNNN…NNNN) and 508–533 (TTNS…STTT). Residues 550–689 (DKDEVIAGER…YLKKAINDSG (140 aa)) form the N-terminal Ras-GEF domain. A DEP domain is found at 723–801 (MSQSLQLKER…SSSSTTTTTT (79 aa)). 2 disordered regions span residues 781–864 (SKSG…PNSI) and 884–920 (GIAN…SNSF). The segment covering 783–864 (SGSSFSPSSS…ITSTSLPNSI (82 aa)) has biased composition (low complexity). The 230-residue stretch at 964–1193 (HPVEIARQLT…YKASHMIEQP (230 aa)) folds into the Ras-GEF domain. Residues 1214-1267 (TTTTTNNLNNNNNNNNPNNNNNNNNNSANNKSSPSPSPSSSPITSSPISSLTIN) are disordered.

Promotes the exchange of Ras-bound GDP by GTP. Seems to play a role in chemotaxis. In Dictyostelium discoideum (Social amoeba), this protein is Ras guanine nucleotide exchange factor Q (gefQ).